We begin with the raw amino-acid sequence, 304 residues long: E3 ubiquitin-protein ligase RNF115 (304 aa).

Ala2 is subject to N-acetylalanine. The interval 95–138 (PLDQDNRANERGHQTHTDFWGARPPRLPLGRRYRSRGSSRPDRS) is disordered. Positions 98-110 (QDNRANERGHQTH) are enriched in basic and acidic residues. Phosphoserine; by PKB/AKT1 is present on residues Ser132 and Ser133. The segment at 228 to 269 (CPVCKEDYTVEEEVRQLPCNHFFHSSCIVPWLELHDTCPVCR) adopts an RING-type zinc-finger fold. The segment at 272–304 (LNGEDSTRQSQSTEASASNRFSNDSQLHDRWTF) is disordered. Positions 279–296 (RQSQSTEASASNRFSNDS) are enriched in polar residues.

In terms of assembly, interacts with RAB7A. Interacts with EGFR and FLT3. Interacts with BST2. Interacts with STX17. Interacts with YWHAE. In terms of processing, phosphorylated by AKT1, allowing association with the 14-3-3 chaperones that facilitates associating with TLRs. Post-translationally, RING-type zinc finger-dependent and E2-dependent autoubiquitination. Deubiquitinated by USP9X; antogonizing its autoubiquitination and subsequent proteasomal degradation. In terms of tissue distribution, expressed at extremely low levels in normal breast, prostate, lung, colon. Higher levels of expression are detected in heart, skeletal muscle, testis as well as in breast and prostate cancer cells.

It localises to the cytoplasm. Its subcellular location is the nucleus. The protein localises to the endoplasmic reticulum. It is found in the golgi apparatus. It catalyses the reaction S-ubiquitinyl-[E2 ubiquitin-conjugating enzyme]-L-cysteine + [acceptor protein]-L-lysine = [E2 ubiquitin-conjugating enzyme]-L-cysteine + N(6)-ubiquitinyl-[acceptor protein]-L-lysine.. It functions in the pathway protein modification; protein ubiquitination. In terms of biological role, E3 ubiquitin-protein ligase that catalyzes the 'Lys-48'- and/or 'Lys-63'-linked polyubiquitination of various substrates and thereby plays a role in a number of signaling pathways including autophagy, innate immunity, cell proliferation and cell death. Plays a role in the endosomal trafficking and degradation of membrane receptors including EGFR, FLT3, MET and CXCR4 through their polyubiquitination. Participates together with BST2 in antiviral immunity by facilitating the internalization of HIV-1 virions into intracellular vesicles leading to their lysosomal degradation. Also possesses an antiviral activity independently of BST2 by promoting retroviral GAG proteins ubiquitination, redistribution to endo-lysosomal compartments and, ultimately, lysosomal degradation. Catalyzes distinct types of ubiquitination on MAVS and STING1 at different phases of viral infection to promote innate antiviral response. Mediates the 'Lys-48'-linked ubiquitination of MAVS leading to its proteasomal degradation and ubiquitinates STING1 via 'Lys-63'-linked polyubiquitination, critical for its oligomerization and the subsequent recruitment of TBK1. Plays a positive role in the autophagosome-lysosome fusion by interacting with STX17 and enhancing its stability without affecting 'Lys-48'- or 'Lys-63'-linked polyubiquitination levels, which in turn promotes autophagosome maturation. Negatively regulates TLR-induced expression of proinflammatory cytokines by catalyzing 'Lys-11'-linked ubiquitination of RAB1A and RAB13 to inhibit post-ER trafficking of TLRs to the Golgi by RAB1A and subsequently from the Golgi apparatus to the cell surface by RAB13. This is E3 ubiquitin-protein ligase RNF115 from Homo sapiens (Human).